A 235-amino-acid chain; its full sequence is Sugar fermentation stimulation protein homolog (235 aa).

It belongs to the SfsA family.

The chain is Sugar fermentation stimulation protein homolog from Alkaliphilus oremlandii (strain OhILAs) (Clostridium oremlandii (strain OhILAs)).